Consider the following 237-residue polypeptide: Large ribosomal subunit protein uL1 (237 aa).

The protein belongs to the universal ribosomal protein uL1 family. In terms of assembly, part of the 50S ribosomal subunit.

In terms of biological role, binds directly to 23S rRNA. The L1 stalk is quite mobile in the ribosome, and is involved in E site tRNA release. Its function is as follows. Protein L1 is also a translational repressor protein, it controls the translation of the L11 operon by binding to its mRNA. This Leptothrix cholodnii (strain ATCC 51168 / LMG 8142 / SP-6) (Leptothrix discophora (strain SP-6)) protein is Large ribosomal subunit protein uL1.